The primary structure comprises 208 residues: Imidazoleglycerol-phosphate dehydratase (208 aa).

The protein belongs to the imidazoleglycerol-phosphate dehydratase family.

It localises to the cytoplasm. It carries out the reaction D-erythro-1-(imidazol-4-yl)glycerol 3-phosphate = 3-(imidazol-4-yl)-2-oxopropyl phosphate + H2O. It participates in amino-acid biosynthesis; L-histidine biosynthesis; L-histidine from 5-phospho-alpha-D-ribose 1-diphosphate: step 6/9. The polypeptide is Imidazoleglycerol-phosphate dehydratase (Paenarthrobacter aurescens (strain TC1)).